A 270-amino-acid polypeptide reads, in one-letter code: Eukaryotic translation initiation factor 2 subunit beta (270 aa).

Residues 1 to 38 form a disordered region; the sequence is MADEEQMERKEEATEIAPFDPTKKKKKKKVVIQDPADE.

Belongs to the eIF-2-beta/eIF-5 family. In terms of assembly, eukaryotic translation initiation factor 2 eIF2 is a heterotrimeric complex composed of an alpha, a beta and a gamma subunit.

Its subcellular location is the cytoplasm. It localises to the cytosol. Functionally, component of the eIF2 complex that functions in the early steps of protein synthesis by forming a ternary complex with GTP and initiator tRNA. This complex binds to a 40S ribosomal subunit, followed by mRNA binding to form a 43S pre-initiation complex (43S PIC). Junction of the 60S ribosomal subunit to form the 80S initiation complex is preceded by hydrolysis of the GTP bound to eIF2 and release of an eIF2-GDP binary complex. In order for eIF2 to recycle and catalyze another round of initiation, the GDP bound to eIF2 must exchange with GTP by way of a reaction catalyzed by eIF2B. The sequence is that of Eukaryotic translation initiation factor 2 subunit beta from Triticum aestivum (Wheat).